The primary structure comprises 313 residues: Probable cytochrome c oxidase subunit 2 (313 aa).

The RPE1 insert domain occupies 5–51 (RYWSKQSYKKLKVDQEHNTTEYTNVCNSTSLGSTYTLPLKMELWKIY). A run of 3 helical transmembrane segments spans residues 39-59 (YTLPLKMELWKIYITLIYFLI), 94-114 (LLYIGTAIVLFVAGLLGFVCI), and 131-151 (LLIEIIWTVIPIIILVIIAVP). The Cu cation site is built by His-233, Cys-268, Cys-272, and His-276.

Belongs to the cytochrome c oxidase subunit 2 family. Requires Cu cation as cofactor. The cofactor is heme.

Its subcellular location is the cell membrane. It catalyses the reaction 4 Fe(II)-[cytochrome c] + O2 + 8 H(+)(in) = 4 Fe(III)-[cytochrome c] + 2 H2O + 4 H(+)(out). Functionally, subunits I and II form the functional core of the enzyme complex. Electrons originating in cytochrome c are transferred via heme a and Cu(A) to the binuclear center formed by heme a3 and Cu(B). The protein is Probable cytochrome c oxidase subunit 2 (ctaC) of Rickettsia prowazekii (strain Madrid E).